A 561-amino-acid polypeptide reads, in one-letter code: Urocanate hydratase (561 aa).

Residues 52 to 53 (GG), Q130, 176 to 178 (GMG), E196, R201, 242 to 243 (NA), 263 to 267 (QTSAH), 273 to 274 (YL), and Y322 each bind NAD(+). C410 is a catalytic residue. Position 492 (G492) interacts with NAD(+).

Belongs to the urocanase family. The cofactor is NAD(+).

The protein localises to the cytoplasm. The enzyme catalyses 4-imidazolone-5-propanoate = trans-urocanate + H2O. It functions in the pathway amino-acid degradation; L-histidine degradation into L-glutamate; N-formimidoyl-L-glutamate from L-histidine: step 2/3. Its function is as follows. Catalyzes the conversion of urocanate to 4-imidazolone-5-propionate. This is Urocanate hydratase from Enterobacter sp. (strain 638).